We begin with the raw amino-acid sequence, 348 residues long: Major outer membrane protein P.IB (348 aa).

A signal peptide spans 1–19; sequence MKKSLIALTLAALPVAATA.

Belongs to the Gram-negative porin family. In terms of assembly, homotrimer.

Its subcellular location is the cell outer membrane. In terms of biological role, serves as a slightly cation selective porin. Major antigen on the gonococcal cell surface and it may have pathogenic properties in addition to its porin activity. The polypeptide is Major outer membrane protein P.IB (porB) (Neisseria gonorrhoeae).